A 424-amino-acid polypeptide reads, in one-letter code: uncharacterized protein (424 aa).

Belongs to the serpin family.

This is an uncharacterized protein from Methanosarcina acetivorans (strain ATCC 35395 / DSM 2834 / JCM 12185 / C2A).